The primary structure comprises 130 residues: Lysozyme C (130 aa).

The C-type lysozyme domain maps to 2–130; that stretch reads KVYGRCELAA…VNVWIRGCRL (129 aa). Cystine bridges form between C7–C128, C31–C116, C65–C81, and C77–C95. Active-site residues include E36 and D53.

Belongs to the glycosyl hydrolase 22 family. In terms of assembly, monomer.

It is found in the secreted. The enzyme catalyses Hydrolysis of (1-&gt;4)-beta-linkages between N-acetylmuramic acid and N-acetyl-D-glucosamine residues in a peptidoglycan and between N-acetyl-D-glucosamine residues in chitodextrins.. Its function is as follows. Lysozymes have primarily a bacteriolytic function; those in tissues and body fluids are associated with the monocyte-macrophage system and enhance the activity of immunoagents. The protein is Lysozyme C (LYZ) of Phasianus versicolor (Green pheasant).